A 119-amino-acid polypeptide reads, in one-letter code: MKKVKEAEKRNIKRKKRIRDRIGFGVADRPRVTVFKSNKYFYVQVIDDMAGHTLASVSTIEKDLKLNKNIDDVKKLGEVLAKRLKDKNISRLIFDRNGYKYHGLIASFATSLREAGIDV.

Belongs to the universal ribosomal protein uL18 family. Part of the 50S ribosomal subunit; part of the 5S rRNA/L5/L18/L25 subcomplex. Contacts the 5S and 23S rRNAs.

Functionally, this is one of the proteins that bind and probably mediate the attachment of the 5S RNA into the large ribosomal subunit, where it forms part of the central protuberance. This is Large ribosomal subunit protein uL18 from Borrelia hermsii (strain HS1 / DAH).